The sequence spans 156 residues: MAVGKFLLGSLLLLSLQLGQGWGPDARGVPVADGEFSSEQVAKAGGTWLGTHRPLARLRRALSGPCQLWSLTLSVAELGLGYASEEKVIFRYCAGSCPRGARTQHGLALARLQGQGRAHGGPCCRPTRYTDVAFLDDRHRWQRLPQLSAAACGCGG.

Positions 1 to 21 (MAVGKFLLGSLLLLSLQLGQG) are cleaved as a signal peptide. 3 disulfides stabilise this stretch: C66-C124, C93-C152, and C97-C154.

The protein belongs to the TGF-beta family. GDNF subfamily. In terms of assembly, homodimer; disulfide-linked. Interacts with GFRA4 coreceptor and RET: forms a 2:2:2 ternary complex composed of PSPN ligand, GFRA4 and RET receptor.

It localises to the secreted. In terms of biological role, growth factor that exhibits neurotrophic activity on mesencephalic dopaminergic and motor neurons. Acts by binding to its coreceptor, GFRA4, leading to autophosphorylation and activation of the RET receptor. In Homo sapiens (Human), this protein is Persephin.